The following is a 223-amino-acid chain: Deoxyribose-phosphate aldolase (223 aa).

The active-site Proton donor/acceptor is D89. Residue K152 is the Schiff-base intermediate with acetaldehyde of the active site. The active-site Proton donor/acceptor is the K181.

It belongs to the DeoC/FbaB aldolase family. DeoC type 1 subfamily.

The protein resides in the cytoplasm. It catalyses the reaction 2-deoxy-D-ribose 5-phosphate = D-glyceraldehyde 3-phosphate + acetaldehyde. It functions in the pathway carbohydrate degradation; 2-deoxy-D-ribose 1-phosphate degradation; D-glyceraldehyde 3-phosphate and acetaldehyde from 2-deoxy-alpha-D-ribose 1-phosphate: step 2/2. Catalyzes a reversible aldol reaction between acetaldehyde and D-glyceraldehyde 3-phosphate to generate 2-deoxy-D-ribose 5-phosphate. The polypeptide is Deoxyribose-phosphate aldolase (Listeria monocytogenes serotype 4b (strain CLIP80459)).